The sequence spans 355 residues: Syntaxin-5 (355 aa).

The Cytoplasmic portion of the chain corresponds to 1–333; that stretch reads MIPRKRYGSK…KYFQSVTSNR (333 aa). The IxM motif; signal for cargo packaging into COPII-coated vesicles signature appears at 245–247; the sequence is IDM. Residues 263 to 325 form the t-SNARE coiled-coil homology domain; it reads DSYIQSRADT…EAAHSEILKY (63 aa). Positions 287 to 318 form a coiled coil; that stretch reads FQQLAHMVKEQEETIQRIDENVLGAQLDVEAA. The chain crosses the membrane as a helical; Anchor for type IV membrane protein span at residues 334–354; that stretch reads WLMVKIFLILIVFFIIFVVFL. A topological domain (vesicular) is located at residue A355.

The protein belongs to the syntaxin family. Part of a ternary complex containing STX5A, NSFL1C and VCP. Part of a unique SNARE complex composed of the Golgi SNAREs GOSR1, GOSR2 and YKT6. This complex also includes VTI1A. Component of a SNARE complex consisting of STX5, YKT6, GOSR1 and BET1L. Interacts with BET1L. Interacts with BET1. Interacts with COG4. Interacts with GM130/GOLGA2. Interacts (via IxM motif) with SEC24C and SEC24D; mediates STX5 packaging into COPII-coated vesicles. Interacts with VLDLR; this interaction mediates VLDLR translocation from the endoplasmic reticulum to the plasma membrane. Expressed in the brain, heart, spleen, lung, liver, kidney and testis.

Its subcellular location is the endoplasmic reticulum-Golgi intermediate compartment membrane. The protein resides in the golgi apparatus membrane. Mediates endoplasmic reticulum to Golgi transport. Together with p115/USO1 and GM130/GOLGA2, involved in vesicle tethering and fusion at the cis-Golgi membrane to maintain the stacked and inter-connected structure of the Golgi apparatus. In terms of biological role, required for Golgi to endoplasmic reticulum retrogade transport, and for intra-Golgi transport. The protein is Syntaxin-5 (Stx5) of Rattus norvegicus (Rat).